Here is a 198-residue protein sequence, read N- to C-terminus: Recombination protein RecR (198 aa).

The C4-type zinc-finger motif lies at 57–72 (CEKCNTFTEAQICEVC). In terms of domain architecture, Toprim spans 80–175 (TLLCVVETPA…SVTRLARGVP (96 aa)).

Belongs to the RecR family.

May play a role in DNA repair. It seems to be involved in an RecBC-independent recombinational process of DNA repair. It may act with RecF and RecO. The protein is Recombination protein RecR of Paraburkholderia phymatum (strain DSM 17167 / CIP 108236 / LMG 21445 / STM815) (Burkholderia phymatum).